Consider the following 237-residue polypeptide: H/ACA ribonucleoprotein complex subunit 1 (237 aa).

Composition is skewed to gly residues over residues 1-59 (MGFG…GGRG) and 172-237 (RGGG…RGRW). 2 disordered regions span residues 1 to 64 (MGFG…FDTG) and 157 to 237 (KPPQ…RGRW). 2 RGG-box regions span residues 4-56 (GKPR…GRGG) and 166-236 (KAFT…GRGR).

This sequence belongs to the GAR1 family. As to quaternary structure, component of the box H/ACA small nucleolar ribonucleoprotein (H/ACA snoRNP) complex consisting of Nop60B, Gar1, NPH2 and Nop10, and associated with H/ACA-type snoRNAs.

It is found in the nucleus. The protein resides in the nucleolus. Functionally, component of the box H/ACA small nucleolar ribonucleoprotein (H/ACA snoRNP) complex, which catalyzes pseudouridylation of rRNA. This involves the isomerization of uridine such that the ribose is subsequently attached to C5, instead of the normal N1. Pseudouridine ('psi') residues may serve to stabilize the conformation of rRNAs. Required for ribosome biogenesis. H/ACA snoRNP complex-dependent ribosome biogenesis is important in female germline cell differentiation during oogenesis. The sequence is that of H/ACA ribonucleoprotein complex subunit 1 from Drosophila melanogaster (Fruit fly).